The following is a 668-amino-acid chain: Probable 6-phosphofructo-2-kinase PB17E12.14c (668 aa).

Residues 1–14 (MSNNNNKDDSELQS) show a composition bias toward basic and acidic residues. Disordered regions lie at residues 1–105 (MSNN…GSRP) and 136–185 (HRVP…EATN). Polar residues-rich tracts occupy residues 46–56 (NDHSFTNTDSV), 65–86 (SPVS…QNSP), and 164–184 (SSMS…SEAT). 197-204 (GLPARGKS) serves as a coordination point for ATP. Residues Asp281 and Cys312 contribute to the active site. Arg346 contributes to the beta-D-fructose 6-phosphate binding site. Residue Glu540 is part of the active site. The active-site Proton donor is the His608.

The catalysed reaction is beta-D-fructose 6-phosphate + ATP = beta-D-fructose 2,6-bisphosphate + ADP + H(+). Synthesis of fructose 2,6-bisphosphate. This is Probable 6-phosphofructo-2-kinase PB17E12.14c from Schizosaccharomyces pombe (strain 972 / ATCC 24843) (Fission yeast).